Reading from the N-terminus, the 169-residue chain is MEIVQNFSSAALTTGILLGCLGVIFLPSIVYAAFLLGAVFFCLAGIYVLLHADFVAAAQVLVYVGAINVLILFAIMLVNPQDAPPRALDSPPLIPGIACIGLLGVLVQMISTTSWLTPPWTPEPNSLPVLGGHLFSDCLLAFEVMSLVLLVALVGAIVLARREPVERSS.

The next 5 helical transmembrane spans lie at 7–27 (FSSAALTTGILLGCLGVIFLP), 29–49 (IVYAAFLLGAVFFCLAGIYVL), 58–78 (AQVLVYVGAINVLILFAIMLV), 90–110 (SPPLIPGIACIGLLGVLVQMI), and 139–159 (LLAFEVMSLVLLVALVGAIVL).

The protein belongs to the complex I subunit 6 family. NDH is composed of at least 16 different subunits, 5 of which are encoded in the nucleus.

Its subcellular location is the plastid. The protein resides in the chloroplast thylakoid membrane. The enzyme catalyses a plastoquinone + NADH + (n+1) H(+)(in) = a plastoquinol + NAD(+) + n H(+)(out). It catalyses the reaction a plastoquinone + NADPH + (n+1) H(+)(in) = a plastoquinol + NADP(+) + n H(+)(out). Functionally, NDH shuttles electrons from NAD(P)H:plastoquinone, via FMN and iron-sulfur (Fe-S) centers, to quinones in the photosynthetic chain and possibly in a chloroplast respiratory chain. The immediate electron acceptor for the enzyme in this species is believed to be plastoquinone. Couples the redox reaction to proton translocation, and thus conserves the redox energy in a proton gradient. This is NAD(P)H-quinone oxidoreductase subunit 6, chloroplastic (ndhG) from Nephroselmis olivacea (Green alga).